Here is a 194-residue protein sequence, read N- to C-terminus: Cytochrome c biogenesis ATP-binding export protein CcmA (194 aa).

The ABC transporter domain occupies 5–194 (LALDGVACIR…LDELVMGVLA (190 aa)). Residue 37–44 (GPNGAGKS) coordinates ATP.

It belongs to the ABC transporter superfamily. CcmA exporter (TC 3.A.1.107) family. The complex is composed of two ATP-binding proteins (CcmA) and two transmembrane proteins (CcmB).

It is found in the cell inner membrane. It catalyses the reaction heme b(in) + ATP + H2O = heme b(out) + ADP + phosphate + H(+). In terms of biological role, part of the ABC transporter complex CcmAB involved in the biogenesis of c-type cytochromes; once thought to export heme, this seems not to be the case, but its exact role is uncertain. Responsible for energy coupling to the transport system. The chain is Cytochrome c biogenesis ATP-binding export protein CcmA from Sphingopyxis alaskensis (strain DSM 13593 / LMG 18877 / RB2256) (Sphingomonas alaskensis).